An 855-amino-acid polypeptide reads, in one-letter code: Beta-mannosidase B (855 aa).

Asparagine 98 carries N-linked (GlcNAc...) asparagine glycosylation. Glutamate 430 serves as the catalytic Proton donor. 2 N-linked (GlcNAc...) asparagine glycosylation sites follow: asparagine 693 and asparagine 730.

Belongs to the glycosyl hydrolase 2 family. Beta-mannosidase B subfamily. Homodimer.

It is found in the secreted. The enzyme catalyses Hydrolysis of terminal, non-reducing beta-D-mannose residues in beta-D-mannosides.. It participates in glycan metabolism; N-glycan degradation. In terms of biological role, exoglycosidase that cleaves the single beta-linked mannose residue from the non-reducing end of beta-mannosidic oligosaccharides of various complexity and length. Prefers mannobiose over mannotriose. Is also severely restricted by galactosyl substitutions at the +1 subsite. Has no activity against polymeric mannan. This is Beta-mannosidase B (man9) from Thermothelomyces thermophilus (Myceliophthora thermophila).